A 127-amino-acid chain; its full sequence is Small ribosomal subunit protein eS8 (127 aa).

The segment at 1–24 is disordered; it reads MKWQGKSARKPTGGRLVPARGKRK.

The protein belongs to the eukaryotic ribosomal protein eS8 family. Part of the 30S ribosomal subunit.

This Methanothrix thermoacetophila (strain DSM 6194 / JCM 14653 / NBRC 101360 / PT) (Methanosaeta thermophila) protein is Small ribosomal subunit protein eS8.